The chain runs to 685 residues: tRNA-dihydrouridine(47) synthase [NAD(P)(+)]-like (685 aa).

Residues 1 to 12 (MAATAAAAAAAP) are compositionally biased toward low complexity. 3 disordered regions span residues 1-91 (MAAT…SSSH), 209-234 (AAND…PLCN), and 257-314 (LIDN…SCRT). The segment covering 13-29 (PADPPDSSPAASSPPRP) has biased composition (pro residues). The C3H1-type zinc finger occupies 87 to 118 (KSSSHLCIEVGKSGNVSSCKYGDSCRFSHDID). Composition is skewed to basic and acidic residues over residues 209 to 221 (AAND…HDNL) and 273 to 284 (SKVESDEIDKHG). Polar residues predominate over residues 287–314 (TLNTNTESEDPNLSNGLEPSNNSSSCRT). FMN-binding positions include 338–340 (PLT) and Q392. C423 serves as the catalytic Proton donor. FMN is bound by residues K462, H492, 525–527 (NGD), and 550–551 (AR).

This sequence belongs to the Dus family. Dus3 subfamily. The cofactor is FMN.

It catalyses the reaction 5,6-dihydrouridine(47) in tRNA + NAD(+) = uridine(47) in tRNA + NADH + H(+). The enzyme catalyses 5,6-dihydrouridine(47) in tRNA + NADP(+) = uridine(47) in tRNA + NADPH + H(+). The catalysed reaction is a 5,6-dihydrouridine in mRNA + NAD(+) = a uridine in mRNA + NADH + H(+). It carries out the reaction a 5,6-dihydrouridine in mRNA + NADP(+) = a uridine in mRNA + NADPH + H(+). Functionally, catalyzes the synthesis of dihydrouridine, a modified base found in the D-loop of most tRNAs. Specifically modifies U47 in cytoplasmic tRNAs. Catalyzes the synthesis of dihydrouridine in some mRNAs, thereby affecting their translation. In Oryza sativa subsp. japonica (Rice), this protein is tRNA-dihydrouridine(47) synthase [NAD(P)(+)]-like.